The primary structure comprises 390 residues: Galactokinase (390 aa).

33-36 (EHTD) contacts substrate. Residues Ser-67 and 124–130 (GSGLSSS) contribute to the ATP site. Residues Ser-130 and Glu-162 each coordinate Mg(2+). Residue Asp-174 is the Proton acceptor of the active site. Tyr-224 is a binding site for substrate.

This sequence belongs to the GHMP kinase family. GalK subfamily.

Its subcellular location is the cytoplasm. The enzyme catalyses alpha-D-galactose + ATP = alpha-D-galactose 1-phosphate + ADP + H(+). Its pathway is carbohydrate metabolism; galactose metabolism. Functionally, catalyzes the transfer of the gamma-phosphate of ATP to D-galactose to form alpha-D-galactose-1-phosphate (Gal-1-P). The chain is Galactokinase from Streptococcus mutans serotype c (strain ATCC 700610 / UA159).